The primary structure comprises 806 residues: Leucine--tRNA ligase (806 aa).

The 'HIGH' region signature appears at 38 to 48 (PYPSGEIHMGH). The 'KMSKS' region motif lies at 572-576 (KMSKS). Lys-575 provides a ligand contact to ATP.

Belongs to the class-I aminoacyl-tRNA synthetase family.

The protein resides in the cytoplasm. The catalysed reaction is tRNA(Leu) + L-leucine + ATP = L-leucyl-tRNA(Leu) + AMP + diphosphate. This is Leucine--tRNA ligase from Helicobacter pylori (strain ATCC 700392 / 26695) (Campylobacter pylori).